The following is a 340-amino-acid chain: Speriolin-like protein (340 aa).

Disordered stretches follow at residues 42–73 (GGGH…RFTS) and 94–135 (APLS…KLSP). Residue S60 is modified to Phosphoserine. Positions 123 to 133 (PHSHRGTDRKL) are enriched in basic and acidic residues. S134 bears the Phosphoserine mark.

It belongs to the speriolin family.

Its subcellular location is the cytoplasm. The chain is Speriolin-like protein (SPATC1L) from Homo sapiens (Human).